The sequence spans 790 residues: Nitrogen permease reactivator protein (790 aa).

A disordered region spans residues 1-68; it reads MSSLTRLLQE…DRNRANVPVP (68 aa). Residues 16–38 show a composition bias toward polar residues; it reads TSNSSPRTSADTLTTTPESQSLD. Residues 46 to 58 are compositionally biased toward low complexity; the sequence is SSHIGSVSNSSSS. At S47 the chain carries Phosphoserine; by autocatalysis. Phosphoserine occurs at positions 85, 90, 100, 111, 116, 125, 137, and 141. A compositionally biased stretch (polar residues) spans 151–175; that stretch reads RLSTTSHTSGRAIPSLSSSIPYSVP. Disordered stretches follow at residues 151 to 188 and 234 to 258; these read RLST…NSNS and LQKA…SGSF. The segment covering 176–188 has biased composition (low complexity); sequence NSNKDNNSSNSNS. Over residues 238 to 248 the composition is skewed to polar residues; it reads SMDSNNANATQ. Positions 249-258 are enriched in low complexity; the sequence is SRSISRSGSF. At S257 the chain carries Phosphoserine; by autocatalysis. 7 positions are modified to phosphoserine: S259, S260, S288, S292, S317, S320, and S328. Residues 276–289 are compositionally biased toward low complexity; that stretch reads NSNSAGMSFSANSN. The segment at 276–357 is disordered; sequence NSNSAGMSFS…QSVPRSQHSS (82 aa). 3 stretches are compositionally biased toward polar residues: residues 290–305, 314–339, and 346–357; these read GPSP…NGST, RQSS…SPSS, and PSQSVPRSQHSS. Y334 is modified (phosphotyrosine). Residues S336, S353, and S356 each carry the phosphoserine modification. S357 carries the post-translational modification Phosphoserine; by autocatalysis. S385 carries the post-translational modification Phosphoserine. A Protein kinase domain is found at 438-742; sequence IKTGADLGAG…IEEIMEDPWI (305 aa). ATP-binding positions include 444–452 and K467; that span reads LGAGAGGSV. The active-site Proton acceptor is D561. Disordered stretches follow at residues 666 to 704 and 766 to 790; these read LVTR…NIGP and HHTQ…QNNQ. Over residues 677-688 the composition is skewed to basic and acidic residues; that stretch reads DESHSTEKKKPE. A compositionally biased stretch (low complexity) spans 689–701; sequence SSSNNVSDPNNVN.

It belongs to the protein kinase superfamily. Ser/Thr protein kinase family. In terms of assembly, interacts with TIP41. Post-translationally, hyperphosphorylated in nitrogen-rich growth medium. Nitrogen limitation (or rapamycin treatment) leads to substantial, though not complete dephosphorylation. Autophosphorylation plays only a minor role and seems not to be regulated by the quality of the nitrogen source.

The protein resides in the cytoplasm. It carries out the reaction L-seryl-[protein] + ATP = O-phospho-L-seryl-[protein] + ADP + H(+). The catalysed reaction is L-threonyl-[protein] + ATP = O-phospho-L-threonyl-[protein] + ADP + H(+). Its activity is regulated as follows. Dephosphorylation by SIT4 activates NPR1 kinase activity. Functionally, nutrient-regulated protein kinase that promotes the activity of at least 6 distinct transport systems for nitrogenous nutrients under conditions of nitrogen catabolite derepression. Under poor nitrogen growth conditions, required for post-Golgi sorting of the general amino acid permease GAP1 and the three known ammonia permeases, MEP1/2/3, to the plasma membrane. Also contributes to the stability and the retention of GAP1 at the plasma membrane. Inversely, promotes the degradation of tryptophan permease TAT2 under the same conditions. Activity is regulated by the TOR signaling pathway via phosphatase SIT4. Although thought to be involved in regulation of GLN3-dependent transcription by nitrogen catabolite repression, this seems to be an indirect effect from the reduced uptake of the nitrogen-repressing compound. The chain is Nitrogen permease reactivator protein (NPR1) from Saccharomyces cerevisiae (strain ATCC 204508 / S288c) (Baker's yeast).